A 341-amino-acid chain; its full sequence is Tetraacyldisaccharide 4'-kinase (341 aa).

65–72 (TVGGSGKT) provides a ligand contact to ATP.

The protein belongs to the LpxK family.

The catalysed reaction is a lipid A disaccharide + ATP = a lipid IVA + ADP + H(+). It functions in the pathway glycolipid biosynthesis; lipid IV(A) biosynthesis; lipid IV(A) from (3R)-3-hydroxytetradecanoyl-[acyl-carrier-protein] and UDP-N-acetyl-alpha-D-glucosamine: step 6/6. Transfers the gamma-phosphate of ATP to the 4'-position of a tetraacyldisaccharide 1-phosphate intermediate (termed DS-1-P) to form tetraacyldisaccharide 1,4'-bis-phosphate (lipid IVA). In Shewanella woodyi (strain ATCC 51908 / MS32), this protein is Tetraacyldisaccharide 4'-kinase.